The chain runs to 23 residues: Basic phospholipase A2 homolog (23 aa).

Post-translationally, contains 7 disulfide bonds. Expressed by the venom gland.

The protein localises to the secreted. In Trimeresurus stejnegeri (Chinese green tree viper), this protein is Basic phospholipase A2 homolog.